The chain runs to 354 residues: Deubiquitination-protection protein dph1 (354 aa).

Positions 1–78 (MTNISLTIKA…SIHLVKTLGQ (78 aa)) constitute a Ubiquitin-like domain. Residues 309-353 (PPEERYAEQLSQLNEMGFVDFERNVQALRRSGGNVQGAIESLLSD) enclose the UBA domain.

Protects ubiquitin chains against dissambly by deubiquitinating enzymes thereby promoting protein degradation. The polypeptide is Deubiquitination-protection protein dph1 (dph1) (Schizosaccharomyces pombe (strain 972 / ATCC 24843) (Fission yeast)).